The sequence spans 312 residues: Glyoxylate/hydroxypyruvate reductase A (312 aa).

The active site involves Arg227. The active-site Proton donor is the His275.

The protein belongs to the D-isomer specific 2-hydroxyacid dehydrogenase family. GhrA subfamily.

The protein resides in the cytoplasm. It carries out the reaction glycolate + NADP(+) = glyoxylate + NADPH + H(+). It catalyses the reaction (R)-glycerate + NAD(+) = 3-hydroxypyruvate + NADH + H(+). The catalysed reaction is (R)-glycerate + NADP(+) = 3-hydroxypyruvate + NADPH + H(+). Catalyzes the NADPH-dependent reduction of glyoxylate and hydroxypyruvate into glycolate and glycerate, respectively. This is Glyoxylate/hydroxypyruvate reductase A from Citrobacter koseri (strain ATCC BAA-895 / CDC 4225-83 / SGSC4696).